A 295-amino-acid chain; its full sequence is Bifunctional protein FolD (295 aa).

Residues 169 to 171, Ser-194, and Ile-235 contribute to the NADP(+) site; that span reads GRS.

The protein belongs to the tetrahydrofolate dehydrogenase/cyclohydrolase family. In terms of assembly, homodimer.

The enzyme catalyses (6R)-5,10-methylene-5,6,7,8-tetrahydrofolate + NADP(+) = (6R)-5,10-methenyltetrahydrofolate + NADPH. It catalyses the reaction (6R)-5,10-methenyltetrahydrofolate + H2O = (6R)-10-formyltetrahydrofolate + H(+). It participates in one-carbon metabolism; tetrahydrofolate interconversion. Its function is as follows. Catalyzes the oxidation of 5,10-methylenetetrahydrofolate to 5,10-methenyltetrahydrofolate and then the hydrolysis of 5,10-methenyltetrahydrofolate to 10-formyltetrahydrofolate. The protein is Bifunctional protein FolD of Acaryochloris marina (strain MBIC 11017).